The chain runs to 867 residues: Probable alpha,alpha-trehalose-phosphate synthase [UDP-forming] 9 (867 aa).

Ser5 is modified (phosphoserine). Thr32 carries the phosphothreonine modification. Residues 59-546 form a glycosyltransferase region; that stretch reads ERKIIVANML…AKSFMQDLER (488 aa).

This sequence in the N-terminal section; belongs to the glycosyltransferase 20 family. The protein in the C-terminal section; belongs to the trehalose phosphatase family.

The catalysed reaction is D-glucose 6-phosphate + UDP-alpha-D-glucose = alpha,alpha-trehalose 6-phosphate + UDP + H(+). In Arabidopsis thaliana (Mouse-ear cress), this protein is Probable alpha,alpha-trehalose-phosphate synthase [UDP-forming] 9 (TPS9).